We begin with the raw amino-acid sequence, 1142 residues long: MNDEDKVHDISKKIEREKALINAAQAMRQQTNNEQVRSKLDTQMREGRRNLEFFEEKLRELQMRRLGHGVDNMSLGASPMSGSHRQSVDDFEGYGAPSPPPKEDVRGHSSHQSQGSGPLMPASAPYPGGPPDSNVPRARPNYTRLDLIKFDTPHLGPRIQLMLSQIQFKLNVEEQYLKGIEKMVQLYQMEGDKKSKLDAAAKRVESKQKIVLLKQALKRYEELHIDIDVDGPDDDSINLPALRKPLSGTLSIRILAVKDVDHAPLGRFARSPETFIAVKAEDIVVARTKPSRNDKWEAEFHTFPVDKTNEIEFTVYDKPAEHPVPIAMLWVRISDIVEELRRKKIEAEMTSAGWVSADRVGSRAPPPQFPMGAQSPQFAAPPTSPGSQEQNTMIPPQAPPPSQVVSQPVDGWFNLEPYGQIHLSFNFIKGARPQGMDRLGRKGAVRQRKEEVHEMYGHKFVQKQFYNIMRCALCGDFLKYSAGMQCEDCKYTCHTKCYTSVVTKCISKSNAETDPDEEKINHRIPHRFIPFSNLTANWCCHCGYMLPIGSKKNSRKCSECALTAHAQCVHLVPDFCGMSMAVANQILEGMRTQKKTHKDKASSMSERTLRPGSKTSISSGSIAQASTYSGSTAYTSIASPEATEAAKLMYSQTTPRPGGPDRTSTSSTTASAAAAAAMAPKHSSQPSQAGSIPDFGGSPGYGRPDSRDDEYSAQQQQGYGSPQQRKYNPADYANIDAYSSPQARPQQQQQQQQQTPQQVSPMYQQNPQTPISKPQPVAPSYDNQVVPSASGVPVPTKKPLPSATDPGTGMRIGLDHFNFLAVLGKGNFGKVMLAETKKSRKLYAIKVLKKEFIIENDEVESIRSEKRVFLIANRERHPFLTNLHACFQTETRVYFVMEYISGGDLMLHIQRGMFGTKRAQFYAAEVCLALKYFHENGVIYRDLKLDNILLTLDGHIKIADYGLCKEDMWYGSTTSTFCGTPEFMAPEILLDKKYGRAVDWWAFGVLIYQMLLQQSPFRGEDEDEIYDAILADEPLYPIHMPRDSVSILQKLLTREPDQRLGSGPTDAQEIMSQPFFRNINWDDIYHKRVQPPFLPQIKSATDTSNFDSEFTSVTPVLTPVQSVLSQAMQEEFRGFSYTADFE.

One can recognise an REM-1 1 domain in the interval 1–67 (MNDEDKVHDI…LRELQMRRLG (67 aa)). The tract at residues 70–139 (VDNMSLGASP…PPDSNVPRAR (70 aa)) is disordered. Residues 149–226 (KFDTPHLGPR…LKRYEELHID (78 aa)) form the REM-1 2 domain. The C2 domain maps to 231–349 (GPDDDSINLP…LRRKKIEAEM (119 aa)). The interval 357 to 403 (ADRVGSRAPPPQFPMGAQSPQFAAPPTSPGSQEQNTMIPPQAPPPSQ) is disordered. A compositionally biased stretch (polar residues) spans 385-394 (PGSQEQNTMI). 2 Phorbol-ester/DAG-type zinc fingers span residues 457-505 (GHKF…VTKC) and 525-576 (PHRF…PDFC). 2 disordered regions span residues 592 to 622 (TQKK…SGSI) and 651 to 807 (SQTT…TDPG). Positions 613–622 (SKTSISSGSI) are enriched in polar residues. Low complexity-rich tracts occupy residues 663–677 (TSTS…AAAA), 712–724 (SAQQ…SPQQ), and 741–765 (PQAR…MYQQ). The Protein kinase domain maps to 817–1076 (FNFLAVLGKG…AQEIMSQPFF (260 aa)). ATP is bound by residues 823-831 (LGKGNFGKV) and Lys846. Asp942 acts as the Proton acceptor in catalysis. Residues 1077–1142 (RNINWDDIYH…RGFSYTADFE (66 aa)) form the AGC-kinase C-terminal domain.

The protein belongs to the protein kinase superfamily. AGC Ser/Thr protein kinase family. PKC subfamily.

It carries out the reaction L-seryl-[protein] + ATP = O-phospho-L-seryl-[protein] + ADP + H(+). The catalysed reaction is L-threonyl-[protein] + ATP = O-phospho-L-threonyl-[protein] + ADP + H(+). This is Protein kinase C-like from Neurospora crassa (strain ATCC 24698 / 74-OR23-1A / CBS 708.71 / DSM 1257 / FGSC 987).